Consider the following 411-residue polypeptide: 2,3-bisphosphoglycerate-independent phosphoglycerate mutase (411 aa).

It belongs to the BPG-independent phosphoglycerate mutase family. A-PGAM subfamily.

The enzyme catalyses (2R)-2-phosphoglycerate = (2R)-3-phosphoglycerate. Its pathway is carbohydrate degradation; glycolysis; pyruvate from D-glyceraldehyde 3-phosphate: step 3/5. Functionally, catalyzes the interconversion of 2-phosphoglycerate and 3-phosphoglycerate. This is 2,3-bisphosphoglycerate-independent phosphoglycerate mutase from Pyrobaculum arsenaticum (strain DSM 13514 / JCM 11321 / PZ6).